A 587-amino-acid polypeptide reads, in one-letter code: MDPILQELVDEWFKLDQDETTRNEVSQLIKAEDYATLKQIMHPRIGFGTSGLRAEIGAGFARMNCLTVIQASQGFAEYLLQTVPSAAKLGVVIGHDHRHKSNTFARLTAAVFLQKGFKTYFFDHLVHTPLVPFAVKTLGTAAGVMITASHNPAAYNGYKVYWGNGCAIIPPHDKGIAACIEKNLTPITWDKNLVENHKLADRDFAVGLLKNYWSQLHEFHSENNFSLEMKSLKFVYTPIHGVGLPFVTSALHLFGEQGDMISVPLQDSPNPDFPTVKFPNPEEEGALDLAYEQADANGISYVLATDPDADRFAFAEKINGAWRRFTGDEVGCILAYFIFQEYKNVGKPIDDFYVLSTTVSSAMVKSMAKVEGFHHVETLTGFKWLGNKALELEKQGKFIGLAYEEALGYMVGSIVRDKDGVNALITFLHLLKRLQLQNLSITEVFEQMSKKYGYYTTQNSYFLSRDTPKLRALVDALRHYDTKSGYPATLGSKKITNVRDLTTGYDSSSTDGKATLPVSKSSDNVTFELENGEVIMTIRTSGTEPKLKFYICARGHSLEDSIKNATEVKQAIKSEWFHPQQNGLEEP.

Substrate-binding positions include T49, R53, and 149-150 (SH). S149 serves as the catalytic Phosphoserine intermediate. S149, D306, D308, and D310 together coordinate Mg(2+). A Phosphoserine modification is found at S149. Residues 310–311 (DR), T380, 404–406 (EEA), and K418 contribute to the substrate site.

This sequence belongs to the phosphohexose mutase family. The cofactor is Mg(2+).

The protein localises to the cytoplasm. It is found in the nucleus. The catalysed reaction is alpha-D-ribose 1-phosphate = D-ribose 5-phosphate. Functionally, converts ribose 1-phosphate to ribose 5-phosphate. Involved in ribose salvage via the pentose phosphate pathway. This Schizosaccharomyces pombe (strain 972 / ATCC 24843) (Fission yeast) protein is Probable phosphoribomutase.